The chain runs to 341 residues: Aspartate carbamoyltransferase catalytic subunit (341 aa).

Residues R89 and T90 each coordinate carbamoyl phosphate. K117 contributes to the L-aspartate binding site. R139, H169, and Q172 together coordinate carbamoyl phosphate. Residues R202 and R257 each contribute to the L-aspartate site. Residues G298 and P299 each coordinate carbamoyl phosphate.

The protein belongs to the aspartate/ornithine carbamoyltransferase superfamily. ATCase family. As to quaternary structure, heterododecamer (2C3:3R2) of six catalytic PyrB chains organized as two trimers (C3), and six regulatory PyrI chains organized as three dimers (R2).

The enzyme catalyses carbamoyl phosphate + L-aspartate = N-carbamoyl-L-aspartate + phosphate + H(+). It participates in pyrimidine metabolism; UMP biosynthesis via de novo pathway; (S)-dihydroorotate from bicarbonate: step 2/3. Its function is as follows. Catalyzes the condensation of carbamoyl phosphate and aspartate to form carbamoyl aspartate and inorganic phosphate, the committed step in the de novo pyrimidine nucleotide biosynthesis pathway. The protein is Aspartate carbamoyltransferase catalytic subunit of Paraburkholderia phytofirmans (strain DSM 17436 / LMG 22146 / PsJN) (Burkholderia phytofirmans).